Reading from the N-terminus, the 577-residue chain is Sulfite reductase [NADPH] hemoprotein beta-component (577 aa).

[4Fe-4S] cluster is bound by residues Cys441, Cys447, Cys486, and Cys490. Residue Cys490 coordinates siroheme.

This sequence belongs to the nitrite and sulfite reductase 4Fe-4S domain family. As to quaternary structure, alpha(8)-beta(8). The alpha component is a flavoprotein, the beta component is a hemoprotein. Siroheme serves as cofactor. Requires [4Fe-4S] cluster as cofactor.

It catalyses the reaction hydrogen sulfide + 3 NADP(+) + 3 H2O = sulfite + 3 NADPH + 4 H(+). It participates in sulfur metabolism; hydrogen sulfide biosynthesis; hydrogen sulfide from sulfite (NADPH route): step 1/1. Its function is as follows. Component of the sulfite reductase complex that catalyzes the 6-electron reduction of sulfite to sulfide. This is one of several activities required for the biosynthesis of L-cysteine from sulfate. This Pectobacterium atrosepticum (strain SCRI 1043 / ATCC BAA-672) (Erwinia carotovora subsp. atroseptica) protein is Sulfite reductase [NADPH] hemoprotein beta-component.